The chain runs to 399 residues: Elongation factor Tu (399 aa).

The region spanning 10–209 (KPHVNIGTIG…EVDAYIPTPE (200 aa)) is the tr-type G domain. Positions 19–26 (GHVDHGKT) are G1. Residue 19-26 (GHVDHGKT) coordinates GTP. Thr-26 lines the Mg(2+) pocket. The interval 60-64 (GITIA) is G2. A G3 region spans residues 81 to 84 (DCPG). GTP is bound by residues 81–85 (DCPGH) and 136–139 (NKQD). Positions 136-139 (NKQD) are G4. Residues 174–176 (SAL) form a G5 region.

Belongs to the TRAFAC class translation factor GTPase superfamily. Classic translation factor GTPase family. EF-Tu/EF-1A subfamily. Monomer.

The protein localises to the cytoplasm. The enzyme catalyses GTP + H2O = GDP + phosphate + H(+). Its function is as follows. GTP hydrolase that promotes the GTP-dependent binding of aminoacyl-tRNA to the A-site of ribosomes during protein biosynthesis. The chain is Elongation factor Tu from Helicobacter pylori (strain G27).